The following is a 249-amino-acid chain: 2,3-bisphosphoglycerate-dependent phosphoglycerate mutase (249 aa).

Substrate-binding positions include 8–15, 21–22, R60, 87–90, K98, 114–115, and 183–184; these read RHGESVWN, TG, ERHY, RR, and GN. H9 (tele-phosphohistidine intermediate) is an active-site residue. E87 serves as the catalytic Proton donor/acceptor.

The protein belongs to the phosphoglycerate mutase family. BPG-dependent PGAM subfamily.

It carries out the reaction (2R)-2-phosphoglycerate = (2R)-3-phosphoglycerate. The protein operates within carbohydrate degradation; glycolysis; pyruvate from D-glyceraldehyde 3-phosphate: step 3/5. In terms of biological role, catalyzes the interconversion of 2-phosphoglycerate and 3-phosphoglycerate. The sequence is that of 2,3-bisphosphoglycerate-dependent phosphoglycerate mutase from Endomicrobium trichonymphae.